Here is a 95-residue protein sequence, read N- to C-terminus: Large ribosomal subunit protein uL23 (95 aa).

It belongs to the universal ribosomal protein uL23 family. As to quaternary structure, part of the 50S ribosomal subunit. Contacts protein L29, and trigger factor when it is bound to the ribosome.

Functionally, one of the early assembly proteins it binds 23S rRNA. One of the proteins that surrounds the polypeptide exit tunnel on the outside of the ribosome. Forms the main docking site for trigger factor binding to the ribosome. The protein is Large ribosomal subunit protein uL23 of Pediococcus pentosaceus (strain ATCC 25745 / CCUG 21536 / LMG 10740 / 183-1w).